Reading from the N-terminus, the 142-residue chain is Large ribosomal subunit protein uL11 (142 aa).

This sequence belongs to the universal ribosomal protein uL11 family. As to quaternary structure, part of the ribosomal stalk of the 50S ribosomal subunit. Interacts with L10 and the large rRNA to form the base of the stalk. L10 forms an elongated spine to which L12 dimers bind in a sequential fashion forming a multimeric L10(L12)X complex. In terms of processing, one or more lysine residues are methylated.

Functionally, forms part of the ribosomal stalk which helps the ribosome interact with GTP-bound translation factors. The polypeptide is Large ribosomal subunit protein uL11 (Rhodopseudomonas palustris (strain BisA53)).